We begin with the raw amino-acid sequence, 766 residues long: Protein sak1 (766 aa).

Positions 101–176 form a DNA-binding region, RFX-type winged-helix; that stretch reads GICWLKRACE…YHYCGIKLRG (76 aa). Phosphoserine occurs at positions 223, 224, and 227. 2 disordered regions span residues 271–308 and 708–731; these read PQAHPLPSHLSQSNVPPQLSHSSVPSPAPPRSVSQPTY and LQEHRQSQQHFQQDIEALQSQQQQ. Residues 279–289 show a composition bias toward polar residues; it reads HLSQSNVPPQL. Composition is skewed to low complexity over residues 290–308 and 715–731; these read SHSSVPSPAPPRSVSQPTY and QQHFQQDIEALQSQQQQ.

This sequence belongs to the RFX family.

Its subcellular location is the nucleus. Positively regulates cyclic AMP-dependent protein kinase-mediated exit from the mitotic cell cycle. This chain is Protein sak1 (sak1), found in Schizosaccharomyces pombe (strain 972 / ATCC 24843) (Fission yeast).